A 175-amino-acid polypeptide reads, in one-letter code: Ribosome maturation factor RimP (175 aa).

The segment at Glu-152 to Ala-175 is disordered. Residues Pro-160–Ala-175 are compositionally biased toward acidic residues.

The protein belongs to the RimP family.

The protein localises to the cytoplasm. Its function is as follows. Required for maturation of 30S ribosomal subunits. The polypeptide is Ribosome maturation factor RimP (Nocardioides sp. (strain ATCC BAA-499 / JS614)).